We begin with the raw amino-acid sequence, 911 residues long: Gem-associated protein 4a (911 aa).

As to quaternary structure, component of the core survival motor neuron (SMN) complex composed of Smn, Gem2, Gem3, rig/Gem5 and one of 3 almost identical Gem4 paralogs encoded by Glos/Gem4a, Gem4b or Gem4c. Interacts with Smn; the interaction is probably indirect.

In terms of biological role, component of the survival motor neuron (SMN) complex that catalyzes the assembly of small nuclear ribonucleoproteins (snRNPs), the building blocks of the spliceosome, and thereby plays an important role in the splicing of cellular pre-mRNAs. One of 3 almost identical paralogs (Glos/Gem4a, Gem4b and Gem4c), resulting from a genomic triplication, that have some redundant function. Required for neuromuscular function and organismal viability. The protein is Gem-associated protein 4a of Drosophila melanogaster (Fruit fly).